A 768-amino-acid chain; its full sequence is Cullin-3 (768 aa).

Ser-2 is subject to N-acetylserine. Positions 2–41 (SNLSKGTGSRKDTKMRIRAFPMTMDEKYVNSIWDLLKNAI) are interaction with KLHL18. Ser-585 bears the Phosphoserine mark. A disordered region spans residues 677–698 (VAAKQGESDPERKETRQKVDDD). A compositionally biased stretch (basic and acidic residues) spans 682–698 (GESDPERKETRQKVDDD). Residues 698–760 (DRKHEIEAAI…REYLARTPED (63 aa)) form the Cullin neddylation domain. A Glycyl lysine isopeptide (Lys-Gly) (interchain with G-Cter in NEDD8) cross-link involves residue Lys-712.

This sequence belongs to the cullin family. Forms neddylation-dependent homodimers. Component of multiple BCR (BTB-CUL3-RBX1) E3 ubiquitin-protein ligase complexes formed of CUL3, RBX1 and a variable BTB domain-containing protein acting as both, adapter to cullin and substrate recognition subunit. The BCR complex may be active as a heterodimeric complex, in which NEDD8, covalently attached to one CUL3 molecule, binds to the C-terminus of a second CUL3 molecule. Interacts with RBX1, RNF7, CYCE and TIP120A/CAND1. Part of the BCR(SPOP) containing SPOP, and of BCR containing homodimeric SPOPL or the heterodimer formed by SPOP and SPOPL. Part of the probable BCR(KLHL9-KLHL13) complex with BTB domain proteins KLHL9 and KLHL13. Part of the BCR(KLHL41) complex containing KLHL41. Component of the BCR(KLHL12) E3 ubiquitin ligase complex, at least composed of CUL3 and KLHL12 and RBX1. Component of the BCR(KLHL3) E3 ubiquitin ligase complex, at least composed of CUL3 and KLHL3 and RBX1. Part of the BCR(ENC1) complex containing ENC1. Part of a complex consisting of BMI1/PCGF4, CUL3 and SPOP. Part of a complex consisting of BRMS1, CUL3 and SPOP. Component of the BCR(KLHL21) E3 ubiquitin ligase complex, at least composed of CUL3, KLHL21 and RBX1. Component of the BCR(KLHL22) E3 ubiquitin ligase complex, at least composed of CUL3, KLHL22 and RBX1. Component of the BCR(KLHL25) E3 ubiquitin ligase complex, at least composed of CUL3, KLHL25 and RBX1. Part of a complex consisting of MACROH2A1, CUL3 and SPOP. Component of the BCR(KLHL42) E3 ubiquitin ligase complex, at least composed of CUL3 and KLHL42. Interacts with KLHL42 (via the BTB domain). Interacts with KATNA1; the interaction is enhanced by KLHL42. Component of the BCR(KBTBD8) E3 ubiquitin ligase complex, at least composed of CUL3, KBTBD8 and RBX1. Interacts with KCTD5, KLHL9, KLHL11, KLHL13, GAN, ZBTB16, KLHL3, KLHL15, KLHL20, KLHL36, GMCL2, BTBD1. Part of a complex that contains CUL3, RBX1 and GAN. Interacts (via BTB domain) with KLHL17; the interaction regulates surface GRIK2 expression. Interacts with KCTD7. Part of the BCR(GAN) complex containing GAN. Part of the BCR(KEAP1) complex containing KEAP1. Interacts with KLHL10. Interacts with KAT5 and ATF2. Interacts with KCTD17 in the BCR(KCTD17) E3 ubiquitin ligase complex, at least composed of CUL3, KCTD17 and RBX1. Interacts (when neddylated) with ARIH1; leading to activate the E3 ligase activity of ARIH1. Interacts with COPS9 isoform 2. Interacts with PPP2R5B; this interaction is indirect and mediated through KLHL15-binding and leads to PPP2R5B proteasomal degradation. Interacts with RBBP8/CtIP; this interaction is indirect and mediated through KLHL15-binding and leads to RBBP8 proteasomal degradation. Interacts with KLHL24 in the BCR(KLHL24) E3 ubiquitin ligase complex, composed of CUL3, RBX1 and KLHL24. Interacts with RHOBTB2. Interacts with AURKA and KLHL18 (via BTB domain). Interacts (unneddylated form) with DCUN1D1, DCUN1D2, DCUN1D3, DCUN1D4 and DCUN1D5; these interactions promote the cullin neddylation. Component of a BCR3 (BTB-CUL3-RBX1) E3 ubiquitin ligase complex, also named Cul3-RING ubiquitin ligase complex CUL3(KBTBD6/7), composed of CUL3, RBX1, KBTBD6 and KBTBD7. Component of the BCR(KBTBD2) E3 ubiquitin ligase complex, at least composed of CUL3, KBTBD2 and RBX1. Interacts with KBTBD2 (via the BTB domain). Component of the BCR(KBTBD4) E3 ubiquitin ligase complex, at least composed of CUL3, KBTBD4 and RBX1. Component of the BCR(ARMC5) E3 ubiquitin ligase complex, composed of CUL3, ARMC5 and RBX1. Post-translationally, neddylated. Attachment of NEDD8 is required for the E3 ubiquitin-protein ligase activity of the BCR complex. Deneddylated via its interaction with the COP9 signalosome (CSN) complex. Brain, spermatozoa, and testis (at protein level). Widely expressed.

The protein localises to the nucleus. Its subcellular location is the golgi apparatus. It localises to the cell projection. The protein resides in the cilium. It is found in the flagellum. The protein localises to the cytoplasm. Its subcellular location is the cytoskeleton. It localises to the spindle. The protein resides in the microtubule organizing center. It is found in the centrosome. The protein localises to the spindle pole. The protein operates within protein modification; protein ubiquitination. Its function is as follows. Core component of multiple cullin-RING-based BCR (BTB-CUL3-RBX1) E3 ubiquitin-protein ligase complexes which mediate the ubiquitination and subsequent proteasomal degradation of target proteins. BCR complexes and ARIH1 collaborate in tandem to mediate ubiquitination of target proteins. As a scaffold protein may contribute to catalysis through positioning of the substrate and the ubiquitin-conjugating enzyme. The E3 ubiquitin-protein ligase activity of the complex is dependent on the neddylation of the cullin subunit and is inhibited by the association of the deneddylated cullin subunit with TIP120A/CAND1. The functional specificity of the BCR complex depends on the BTB domain-containing protein as the substrate recognition component. BCR(KLHL42) is involved in ubiquitination of KATNA1. BCR(SPOP) is involved in ubiquitination of BMI1/PCGF4, BRMS1, MACROH2A1 and DAXX, GLI2 and GLI3. Can also form a cullin-RING-based BCR (BTB-CUL3-RBX1) E3 ubiquitin-protein ligase complex containing homodimeric SPOPL or the heterodimer formed by SPOP and SPOPL; these complexes have lower ubiquitin ligase activity. BCR(KLHL9-KLHL13) controls the dynamic behavior of AURKB on mitotic chromosomes and thereby coordinates faithful mitotic progression and completion of cytokinesis. BCR(KLHL12) is involved in ER-Golgi transport by regulating the size of COPII coats, thereby playing a key role in collagen export, which is required for embryonic stem (ES) cells division: BCR(KLHL12) acts by mediating monoubiquitination of SEC31 (SEC31A or SEC31B). BCR(KLHL3) acts as a regulator of ion transport in the distal nephron; by mediating ubiquitination of WNK4. The BCR(KLHL20) E3 ubiquitin ligase complex is involved in interferon response and anterograde Golgi to endosome transport: it mediates both ubiquitination leading to degradation and 'Lys-33'-linked ubiquitination. The BCR(KLHL21) E3 ubiquitin ligase complex regulates localization of the chromosomal passenger complex (CPC) from chromosomes to the spindle midzone in anaphase and mediates the ubiquitination of AURKB. The BCR(KLHL22) ubiquitin ligase complex mediates monoubiquitination of PLK1, leading to PLK1 dissociation from phosphoreceptor proteins and subsequent removal from kinetochores, allowing silencing of the spindle assembly checkpoint (SAC) and chromosome segregation. The BCR(KLHL22) ubiquitin ligase complex is also responsible for the amino acid-stimulated 'Lys-48' polyubiquitination and proteasomal degradation of DEPDC5. Through the degradation of DEPDC5, releases the GATOR1 complex-mediated inhibition of the TORC1 pathway. The BCR(KLHL25) ubiquitin ligase complex is involved in translational homeostasis by mediating ubiquitination and subsequent degradation of hypophosphorylated EIF4EBP1 (4E-BP1). The BCR(KLHL25) ubiquitin ligase complex is also involved in lipid synthesis by mediating ubiquitination and degradation of ACLY. The BCR(KBTBD8) complex acts by mediating monoubiquitination of NOLC1 and TCOF1, leading to remodel the translational program of differentiating cells in favor of neural crest specification. Involved in ubiquitination of cyclin E and of cyclin D1 (in vitro) thus involved in regulation of G1/S transition. Involved in the ubiquitination of KEAP1, ENC1 and KLHL41. In concert with ATF2 and RBX1, promotes degradation of KAT5 thereby attenuating its ability to acetylate and activate ATM. The BCR(KCTD17) E3 ubiquitin ligase complex mediates ubiquitination and degradation of TCHP, a down-regulator of cilium assembly, thereby inducing ciliogenesis. The BCR(KLHL24) E3 ubiquitin ligase complex mediates ubiquitination of KRT14, controls KRT14 levels during keratinocytes differentiation, and is essential for skin integrity. The BCR(KLHL18) E3 ubiquitin ligase complex mediates the ubiquitination of AURKA leading to its activation at the centrosome which is required for initiating mitotic entry. The BCR(KEAP1) E3 ubiquitin ligase complex acts as a key sensor of oxidative and electrophilic stress by mediating ubiquitination and degradation of NFE2L2/NRF2, a transcription factor regulating expression of many cytoprotective genes. As part of the CUL3(KBTBD6/7) E3 ubiquitin ligase complex functions mediates 'Lys-48' ubiquitination and proteasomal degradation of TIAM1. By controlling the ubiquitination of that RAC1 guanine exchange factors (GEF), regulates RAC1 signal transduction and downstream biological processes including the organization of the cytoskeleton, cell migration and cell proliferation. The BCR(KBTBD4) E3 ubiquitin ligase complex targets CoREST corepressor complex components RCOR1, KDM1A/LSD1 and HDAC2 for proteasomal degradation with RCOR1 likely to be the primary target while degradation of KDM1A and HDAC2 is likely due to their association with RCOR1. It also targets RCOR3, MIER2 and MIER3 for proteasomal degradation as well as associated proteins ZNF217 and RREB1 with degradation being dependent on the presence of an ELM2 domain in the target proteins. The BCR(ARMC5) complex mediates premature transcription termination of transcripts that are unfavorably configured for transcriptional elongation by mediating ubiquitination of Pol II subunit POLR2A. Required for 'Lys-63'-linked ubiquitination of large ribosomal subunit protein MRPL12. The chain is Cullin-3 from Homo sapiens (Human).